The primary structure comprises 237 residues: N-(5'-phosphoribosyl)anthranilate isomerase (237 aa).

The protein belongs to the TrpF family.

The catalysed reaction is N-(5-phospho-beta-D-ribosyl)anthranilate = 1-(2-carboxyphenylamino)-1-deoxy-D-ribulose 5-phosphate. It functions in the pathway amino-acid biosynthesis; L-tryptophan biosynthesis; L-tryptophan from chorismate: step 3/5. This is N-(5'-phosphoribosyl)anthranilate isomerase (TRP1) from Komagataella pastoris (Yeast).